The sequence spans 121 residues: Small ribosomal subunit protein uS13 (121 aa).

Residues 94–121 (GLPLRGQRTRTNARTRKGPRKAGVALKK) form a disordered region.

Belongs to the universal ribosomal protein uS13 family. As to quaternary structure, part of the 30S ribosomal subunit. Forms a loose heterodimer with protein S19. Forms two bridges to the 50S subunit in the 70S ribosome.

In terms of biological role, located at the top of the head of the 30S subunit, it contacts several helices of the 16S rRNA. In the 70S ribosome it contacts the 23S rRNA (bridge B1a) and protein L5 of the 50S subunit (bridge B1b), connecting the 2 subunits; these bridges are implicated in subunit movement. Contacts the tRNAs in the A and P-sites. This is Small ribosomal subunit protein uS13 from Ralstonia nicotianae (strain ATCC BAA-1114 / GMI1000) (Ralstonia solanacearum).